We begin with the raw amino-acid sequence, 258 residues long: Phosphate import ATP-binding protein PstB (258 aa).

Positions 5 to 247 (IDVSGLTAYY…ERIFSNPSVQ (243 aa)) constitute an ABC transporter domain. Residue 37–44 (GPSGCGKS) coordinates ATP.

It belongs to the ABC transporter superfamily. Phosphate importer (TC 3.A.1.7) family. The complex is composed of two ATP-binding proteins (PstB), two transmembrane proteins (PstC and PstA) and a solute-binding protein (PstS).

It localises to the cell membrane. The catalysed reaction is phosphate(out) + ATP + H2O = ADP + 2 phosphate(in) + H(+). Part of the ABC transporter complex PstSACB involved in phosphate import. Responsible for energy coupling to the transport system. The polypeptide is Phosphate import ATP-binding protein PstB (Streptomyces avermitilis (strain ATCC 31267 / DSM 46492 / JCM 5070 / NBRC 14893 / NCIMB 12804 / NRRL 8165 / MA-4680)).